The sequence spans 477 residues: uncharacterized protein (477 aa).

Residues 107 to 129 traverse the membrane as a helical segment; the sequence is VNFWSLSMACASVLALLGLVYLI.

The protein resides in the membrane. This is an uncharacterized protein from Treponema pallidum (strain Nichols).